A 410-amino-acid chain; its full sequence is Segmentation protein fushi tarazu (410 aa).

Disordered regions lie at residues 71 to 93 (TQTV…KAED), 138 to 157 (PAVS…QEYV), and 175 to 221 (SPQS…SAVS). Positions 76 to 85 (PVQPTTPPPK) are enriched in pro residues. The span at 190–199 (TPPPTTPTSL) shows a compositional bias: pro residues. Positions 254–313 (SKRTRQTYTRYQTLELEKEFHFNRYITRRRRIDIANALSLSERQIKIWFQNRRMKSKKDR) form a DNA-binding region, homeobox.

Belongs to the Antp homeobox family. Post-translationally, phosphorylated at as many as 16 sites. Expressed early in development in a striped pattern at the blastoderm stage. Later expressed in a specific subset of neuronal precursor cells, neurons and glia in the developing CNS. Between 5 and 6 hours of development, found in the midline precursor-2 cells in a segmentally repeating pattern. Expression in many other neuronal precursors follows and reaches a second peak of abundance at 9 hours of development. Expressed in the hindgut between 11-15 hours of development.

The protein localises to the nucleus. In terms of biological role, may play a role in determining neuronal identity, may be directly involved in specifying identity of individual neurons. Required during embryogenesis for the process of body segmentation. Homeotic protein, required in alternating segment primordia, it specifies the correct number of segments. This Drosophila melanogaster (Fruit fly) protein is Segmentation protein fushi tarazu (ftz).